We begin with the raw amino-acid sequence, 495 residues long: Ubiquinone biosynthesis monooxygenase COQ6, mitochondrial (495 aa).

This sequence belongs to the UbiH/COQ6 family. As to quaternary structure, component of a multi-subunit COQ enzyme complex. The cofactor is FAD.

The protein localises to the mitochondrion inner membrane. The enzyme catalyses a 4-hydroxy-3-(all-trans-polyprenyl)benzoate + 2 reduced [2Fe-2S]-[ferredoxin] + O2 + 2 H(+) = a 3,4-dihydroxy-5-(all-trans-polyprenyl)benzoate + 2 oxidized [2Fe-2S]-[ferredoxin] + H2O. It carries out the reaction a 2-methoxy-6-(all-trans-polyprenyl)phenol + 2 reduced [2Fe-2S]-[ferredoxin] + O2 + 2 H(+) = a 2-methoxy-6-(all-trans-polyprenyl)benzene-1,4-diol + 2 oxidized [2Fe-2S]-[ferredoxin] + H2O. It participates in cofactor biosynthesis; ubiquinone biosynthesis. Functionally, FAD-dependent monooxygenase required for two non-consecutive steps during ubiquinone biosynthesis. Required for the C5-ring hydroxylation during ubiquinone biosynthesis by catalyzing the hydroxylation of 4-hydroxy-3-(all-trans-polyprenyl)benzoic acid to 3,4-dihydroxy-5-(all-trans-polyprenyl)benzoic acid. Also acts downstream of coq4, for the C1-hydroxylation during ubiquinone biosynthesis by catalyzing the hydroxylation of 2-methoxy-6-(all-trans-polyprenyl)phenol to 2-methoxy-6-(all-trans-polyprenyl)benzene-1,4-diol. The electrons required for the hydroxylation reaction are funneled indirectly to coq6 from NADPH via a ferredoxin/ferredoxin reductase system. The sequence is that of Ubiquinone biosynthesis monooxygenase COQ6, mitochondrial from Dictyostelium discoideum (Social amoeba).